We begin with the raw amino-acid sequence, 141 residues long: Large ribosomal subunit protein bL17 (141 aa).

It belongs to the bacterial ribosomal protein bL17 family. As to quaternary structure, part of the 50S ribosomal subunit. Contacts protein L32.

This chain is Large ribosomal subunit protein bL17, found in Bartonella bacilliformis (strain ATCC 35685 / KC583 / Herrer 020/F12,63).